A 143-amino-acid polypeptide reads, in one-letter code: Large ribosomal subunit protein uL13 (143 aa).

It belongs to the universal ribosomal protein uL13 family. Part of the 50S ribosomal subunit.

Functionally, this protein is one of the early assembly proteins of the 50S ribosomal subunit, although it is not seen to bind rRNA by itself. It is important during the early stages of 50S assembly. The polypeptide is Large ribosomal subunit protein uL13 (Alkaliphilus oremlandii (strain OhILAs) (Clostridium oremlandii (strain OhILAs))).